A 137-amino-acid chain; its full sequence is Small ribosomal subunit protein uS9c (137 aa).

It belongs to the universal ribosomal protein uS9 family.

It is found in the plastid. The protein resides in the chloroplast. This chain is Small ribosomal subunit protein uS9c (rps9), found in Chlorella vulgaris (Green alga).